Here is a 1372-residue protein sequence, read N- to C-terminus: Cell fusion protein fus1 (1372 aa).

Residues 104–522 (LCPDDPNLVN…EQGNNAPGYS (419 aa)) enclose the GBD/FH3 domain. The short motif at 802–817 (PFKAPPPAPLPPPAPP) is the SH3-binding element. The 411-residue stretch at 868-1278 (PGELCNPSKR…AFLRLQALKA (411 aa)) folds into the FH2 domain.

This sequence belongs to the formin homology family. BNI1 subfamily. Interacts with actin at the FH2 domain.

The protein resides in the cytoplasm. In terms of biological role, required for cell fusion. It associates with the pre-zygotic projection tips in conjugating cells. The polypeptide is Cell fusion protein fus1 (fus1) (Schizosaccharomyces pombe (strain 972 / ATCC 24843) (Fission yeast)).